A 617-amino-acid chain; its full sequence is Hemagglutinin glycoprotein (617 aa).

The Intravirion portion of the chain corresponds to 1–37; that stretch reads MSPQRDRINAFYKDNPHPKGSRIVINREHLMIDRPYV. The segment at 1 to 154 is stalk; the sequence is MSPQRDRINA…RIKLDYDQYC (154 aa). A helical transmembrane segment spans residues 38 to 58; that stretch reads LLAVLFVMFLSLIGLLAIAGI. The Virion surface portion of the chain corresponds to 59 to 617; that stretch reads RLHRAAIYTA…VTREDGTNRR (559 aa). The N-linked (GlcNAc...) asparagine; by host glycan is linked to N168. The interval 171 to 175 is involved in cell-to-cell fusion dependent on CADM1, CADM2, and NECTIN4; that stretch reads LLEAR. 4 N-linked (GlcNAc...) asparagine; by host glycosylation sites follow: N187, N200, N215, and N238. Intrachain disulfides connect C188–C606, C287–C300, C381–C494, C386–C394, and C570–C579. N-linked (GlcNAc...) asparagine; by host glycosylation is present at N416. The segment at 458–543 is interaction with host NECTIN4 receptor; the sequence is PMKNLALGVI…VEHAVVYYVY (86 aa).

This sequence belongs to the paramyxoviruses hemagglutinin-neuraminidase family. Non-sialidase subfamily. Homodimer; disulfide-linked. Further forms homotetramer (dimer of dimers). Interacts (via C-terminus) with human NECTIN4 (via N-terminus); this interaction allows attachment to the respiratory epithelium and viral entry. Interacts (via C-terminus) with human SLAMF1/CD150 (via N-terminus); this interaction allows attachment and viral entry into the CD150-expressing immune cells.

It localises to the virion membrane. The protein localises to the host cell membrane. Its function is as follows. Attaches the virus to the human SLAMF1/CD150 receptor for entry into host dendritic cells, macrophages, activated memory T cells and naive or memory B cells, thereby explaining the long immunosuppression that follows infection. In the respiratory airways, binds to the NECTIN4 receptor for entry into the host cell. During viral entry or virus-mediated fusion between infected cells and neighboring susceptible cells, the head domain of the H protein initially binds to its receptor and then the stalk region of the H protein transmits the fusion-triggering signal to the F protein. Unilateral receptor binding to only one of the covalently linked dimer pairs in the H tetramer is sufficient for F triggering. In case of neuropathogenic strains, host CADM1 (isoform 5) and CADM2 (isoform 5) can interact with measles hemagglutinin to trigger hyperfusogenic F-mediated membrane fusion and presumably transsynaptic cell-to-cell transmission of the virus. The sequence is that of Hemagglutinin glycoprotein (H) from Homo sapiens (Human).